Consider the following 221-residue polypeptide: NAD(P)H-hydrate epimerase (221 aa).

The 211-residue stretch at 9 to 219 (MRELETAAVK…NIGLPKELLS (211 aa)) folds into the YjeF N-terminal domain. Position 60-64 (60-64 (GNGGD)) interacts with (6S)-NADPHX. Asn-61 and Asp-131 together coordinate K(+). (6S)-NADPHX contacts are provided by residues 135-141 (GIGFKGE), Tyr-146, and Asp-164. Ser-167 contacts K(+).

The protein belongs to the NnrE/AIBP family. K(+) serves as cofactor.

It catalyses the reaction (6R)-NADHX = (6S)-NADHX. The enzyme catalyses (6R)-NADPHX = (6S)-NADPHX. In terms of biological role, catalyzes the epimerization of the S- and R-forms of NAD(P)HX, a damaged form of NAD(P)H that is a result of enzymatic or heat-dependent hydration. This is a prerequisite for the S-specific NAD(P)H-hydrate dehydratase to allow the repair of both epimers of NAD(P)HX. This chain is NAD(P)H-hydrate epimerase, found in Elusimicrobium minutum (strain Pei191).